Here is a 183-residue protein sequence, read N- to C-terminus: Capsid protein (183 aa).

Residues 143-183 form a disordered region; that stretch reads LPETTVVRRRGRSPRRRTPSPRRRRSKSPRRRRSQSRESQC. The span at 149–176 shows a compositional bias: basic residues; it reads VRRRGRSPRRRTPSPRRRRSKSPRRRRS. Phosphoserine; by host is present on residues S155, S162, and S170. Residues 155–160 form a 1; half-length repeat; the sequence is SPRRRT. Residues 155 to 176 are 3 X 7 AA repeats of S-P-R-R-R-[PR]-S; sequence SPRRRTPSPRRRRSKSPRRRRS. Residues 158-175 carry the Bipartite nuclear localization signal motif; it reads RRTPSPRRRRSKSPRRRR. A run of 2 repeats spans residues 162–168 and 170–176. The segment at 177 to 183 is RNA binding; the sequence is QSRESQC.

The protein belongs to the orthohepadnavirus core antigen family. Homodimerizes, then multimerizes. Interacts with cytosol exposed regions of viral L glycoprotein present in the reticulum-to-Golgi compartment. Interacts with human FLNB. Phosphorylated form interacts with host importin alpha; this interaction depends on the exposure of the NLS, which itself depends upon genome maturation and/or phosphorylation of the capsid protein. Interacts with host NUP153. In terms of processing, phosphorylated by host SRPK1, SRPK2, and maybe protein kinase C or GAPDH. Phosphorylation is critical for pregenomic RNA packaging. Protein kinase C phosphorylation is stimulated by HBx protein and may play a role in transport of the viral genome to the nucleus at the late step during the viral replication cycle.

The protein localises to the virion. The protein resides in the host cytoplasm. Its function is as follows. Self assembles to form an icosahedral capsid. Most capsids appear to be large particles with an icosahedral symmetry of T=4 and consist of 240 copies of capsid protein, though a fraction forms smaller T=3 particles consisting of 180 capsid proteins. Entering capsids are transported along microtubules to the nucleus. Phosphorylation of the capsid is thought to induce exposure of nuclear localization signal in the C-terminal portion of the capsid protein that allows binding to the nuclear pore complex via the importin (karyopherin-) alpha and beta. Capsids are imported in intact form through the nuclear pore into the nuclear basket, where it probably binds NUP153. Only capsids that contain the mature viral genome can release the viral DNA and capsid protein into the nucleoplasm. Immature capsids get stuck in the basket. Capsids encapsulate the pre-genomic RNA and the P protein. Pre-genomic RNA is reverse-transcribed into DNA while the capsid is still in the cytoplasm. The capsid can then either be directed to the nucleus, providing more genomes for transcription, or bud through the endoplasmic reticulum to provide new virions. This is Capsid protein from Homo sapiens (Human).